The following is an 876-amino-acid chain: Alanine--tRNA ligase (876 aa).

Zn(2+)-binding residues include His566, His570, Cys668, and His672.

The protein belongs to the class-II aminoacyl-tRNA synthetase family. The cofactor is Zn(2+).

Its subcellular location is the cytoplasm. The catalysed reaction is tRNA(Ala) + L-alanine + ATP = L-alanyl-tRNA(Ala) + AMP + diphosphate. In terms of biological role, catalyzes the attachment of alanine to tRNA(Ala) in a two-step reaction: alanine is first activated by ATP to form Ala-AMP and then transferred to the acceptor end of tRNA(Ala). Also edits incorrectly charged Ser-tRNA(Ala) and Gly-tRNA(Ala) via its editing domain. In Petrotoga mobilis (strain DSM 10674 / SJ95), this protein is Alanine--tRNA ligase.